The sequence spans 338 residues: Nicotinate-nucleotide--dimethylbenzimidazole phosphoribosyltransferase (338 aa).

Residue glutamate 305 is the Proton acceptor of the active site.

It belongs to the CobT family.

It catalyses the reaction 5,6-dimethylbenzimidazole + nicotinate beta-D-ribonucleotide = alpha-ribazole 5'-phosphate + nicotinate + H(+). It participates in nucleoside biosynthesis; alpha-ribazole biosynthesis; alpha-ribazole from 5,6-dimethylbenzimidazole: step 1/2. In terms of biological role, catalyzes the synthesis of alpha-ribazole-5'-phosphate from nicotinate mononucleotide (NAMN) and 5,6-dimethylbenzimidazole (DMB). This is Nicotinate-nucleotide--dimethylbenzimidazole phosphoribosyltransferase from Rhizobium etli (strain ATCC 51251 / DSM 11541 / JCM 21823 / NBRC 15573 / CFN 42).